We begin with the raw amino-acid sequence, 317 residues long: Ribosomal RNA small subunit methyltransferase H (317 aa).

S-adenosyl-L-methionine contacts are provided by residues 36 to 38 (GGH), Asp-56, Phe-80, Asp-102, and Gln-109.

Belongs to the methyltransferase superfamily. RsmH family.

Its subcellular location is the cytoplasm. It catalyses the reaction cytidine(1402) in 16S rRNA + S-adenosyl-L-methionine = N(4)-methylcytidine(1402) in 16S rRNA + S-adenosyl-L-homocysteine + H(+). Functionally, specifically methylates the N4 position of cytidine in position 1402 (C1402) of 16S rRNA. The chain is Ribosomal RNA small subunit methyltransferase H from Baumannia cicadellinicola subsp. Homalodisca coagulata.